The sequence spans 316 residues: tRNA dimethylallyltransferase (316 aa).

17–24 (GPTASGKT) provides a ligand contact to ATP. 19–24 (TASGKT) provides a ligand contact to substrate. Interaction with substrate tRNA regions lie at residues 42-45 (DSAL), 166-170 (QRLSR), 247-252 (RCVGYR), and 280-287 (KRQITWLR).

It belongs to the IPP transferase family. As to quaternary structure, monomer. It depends on Mg(2+) as a cofactor.

The catalysed reaction is adenosine(37) in tRNA + dimethylallyl diphosphate = N(6)-dimethylallyladenosine(37) in tRNA + diphosphate. Catalyzes the transfer of a dimethylallyl group onto the adenine at position 37 in tRNAs that read codons beginning with uridine, leading to the formation of N6-(dimethylallyl)adenosine (i(6)A). The chain is tRNA dimethylallyltransferase from Shigella dysenteriae serotype 1 (strain Sd197).